The following is a 303-amino-acid chain: Putative S-adenosyl-L-methionine-dependent methyltransferase ML2020 (303 aa).

S-adenosyl-L-methionine is bound by residues Asp-130 and 159 to 160; that span reads DL.

Belongs to the UPF0677 family.

Functionally, exhibits S-adenosyl-L-methionine-dependent methyltransferase activity. In Mycobacterium leprae (strain TN), this protein is Putative S-adenosyl-L-methionine-dependent methyltransferase ML2020.